A 307-amino-acid polypeptide reads, in one-letter code: Lipoyl synthase (307 aa).

[4Fe-4S] cluster is bound by residues Cys-55, Cys-60, Cys-66, Cys-81, Cys-85, Cys-88, and Ser-292. Residues 67 to 281 enclose the Radical SAM core domain; it reads WEDREATFLI…ARHAEELGFS (215 aa).

The protein belongs to the radical SAM superfamily. Lipoyl synthase family. It depends on [4Fe-4S] cluster as a cofactor.

It is found in the cytoplasm. It carries out the reaction [[Fe-S] cluster scaffold protein carrying a second [4Fe-4S](2+) cluster] + N(6)-octanoyl-L-lysyl-[protein] + 2 oxidized [2Fe-2S]-[ferredoxin] + 2 S-adenosyl-L-methionine + 4 H(+) = [[Fe-S] cluster scaffold protein] + N(6)-[(R)-dihydrolipoyl]-L-lysyl-[protein] + 4 Fe(3+) + 2 hydrogen sulfide + 2 5'-deoxyadenosine + 2 L-methionine + 2 reduced [2Fe-2S]-[ferredoxin]. It participates in protein modification; protein lipoylation via endogenous pathway; protein N(6)-(lipoyl)lysine from octanoyl-[acyl-carrier-protein]: step 2/2. In terms of biological role, catalyzes the radical-mediated insertion of two sulfur atoms into the C-6 and C-8 positions of the octanoyl moiety bound to the lipoyl domains of lipoate-dependent enzymes, thereby converting the octanoylated domains into lipoylated derivatives. The polypeptide is Lipoyl synthase (Mycobacterium avium (strain 104)).